The sequence spans 134 residues: Pro-opiomelanocortin (134 aa).

At Ser-1 the chain carries N-acetylserine. Val-13 is modified (valine amide). Ser-31 is subject to Phosphoserine. 2 stretches are compositionally biased toward basic and acidic residues: residues 43-52 (LARERPEPAR) and 79-104 (SAEK…DKRY). Residues 43–107 (LARERPEPAR…PAKDKRYGGF (65 aa)) form a disordered region.

The protein belongs to the POMC family. Post-translationally, specific enzymatic cleavages at paired basic residues yield the different active peptides. As to expression, ACTH and MSH are produced by the pituitary gland.

The protein resides in the secreted. In terms of biological role, stimulates the adrenal glands to release cortisol. Functionally, anorexigenic peptide. Increases the pigmentation of skin by increasing melanin production in melanocytes. Increases the pigmentation of skin by increasing melanin production in melanocytes. Its function is as follows. Endogenous orexigenic opiate. In terms of biological role, endogenous opiate. In Loxodonta africana (African elephant), this protein is Pro-opiomelanocortin (POMC).